A 399-amino-acid chain; its full sequence is Protein DDI1 homolog 2 (399 aa).

The Ubiquitin-like domain maps to 1 to 81; it reads MLLTVYCVRR…VILRQKENAD (81 aa). Positions 99–134 are disordered; that stretch reads IAVPGTSNPQQRQLPRTQAQHSSPGEMASSPQGLDN. Positions 103-131 are enriched in polar residues; the sequence is GTSNPQQRQLPRTQAQHSSPGEMASSPQG. Phosphothreonine is present on threonine 104. Residues serine 121, serine 128, serine 150, and serine 194 each carry the phosphoserine modification. Residue aspartate 252 is part of the active site. A Ubiquitin-binding motif is present at residues 376-395; the sequence is EEIADQELAEAIQKSAEDAE.

This sequence belongs to the DDI1 family. In terms of assembly, homodimer.

The protein resides in the cytoplasm. The protein localises to the cytosol. It is found in the chromosome. Its function is as follows. Aspartic protease that mediates the cleavage of NFE2L1/NRF1 at 'Leu-104', thereby promoting release of NFE2L1/NRF1 from the endoplasmic reticulum membrane. Ubiquitination of NFE2L1/NRF1 is a prerequisite for cleavage, suggesting that DDI2 specifically recognizes and binds ubiquitinated NFE2L1/NRF1. Seems to act as a proteasomal shuttle which links the proteasome and replication fork proteins like RTF2. Required, with DDI1, for cellular survival following replication stress. Together or redudantly with DDI1, removes RTF2 from stalled forks to allow cell cycle progression after replication stress and maintains genome integrity. This chain is Protein DDI1 homolog 2, found in Mus musculus (Mouse).